A 172-amino-acid polypeptide reads, in one-letter code: Ribosome maturation factor RimM (172 aa).

Positions 96–168 (EGEFYYHQII…RVDVELMEGL (73 aa)) constitute a PRC barrel domain.

This sequence belongs to the RimM family. Binds ribosomal protein uS19.

It localises to the cytoplasm. Functionally, an accessory protein needed during the final step in the assembly of 30S ribosomal subunit, possibly for assembly of the head region. Essential for efficient processing of 16S rRNA. May be needed both before and after RbfA during the maturation of 16S rRNA. It has affinity for free ribosomal 30S subunits but not for 70S ribosomes. The protein is Ribosome maturation factor RimM of Streptococcus pyogenes serotype M18 (strain MGAS8232).